Consider the following 271-residue polypeptide: Peroxiredoxin-4 (271 aa).

Positions 1–37 are cleaved as a signal peptide; it reads MEALPLLAATTPDHGRHRRLLLLPLLLFLLPAGAVQG. Residues 79–237 enclose the Thioredoxin domain; that stretch reads AKISKPAPYW…TLRLVQAFQY (159 aa). Cys124 serves as the catalytic Cysteine sulfenic acid (-SOH) intermediate.

This sequence belongs to the peroxiredoxin family. AhpC/Prx1 subfamily. As to quaternary structure, homodimer; disulfide-linked, upon oxidation. 5 homodimers assemble to form a ring-like decamer. Can form heterodimers with PRDX1. The enzyme can be inactivated by further oxidation of the cysteine sulfenic acid (C(P)-SOH) to sulphinic acid (C(P)-SO2H) and sulphonic acid (C(P)-SO3H) instead of its condensation to a disulfide bond.

It is found in the cytoplasm. The protein resides in the endoplasmic reticulum. The enzyme catalyses a hydroperoxide + [thioredoxin]-dithiol = an alcohol + [thioredoxin]-disulfide + H2O. Thiol-specific peroxidase that catalyzes the reduction of hydrogen peroxide and organic hydroperoxides to water and alcohols, respectively. Plays a role in cell protection against oxidative stress by detoxifying peroxides and as sensor of hydrogen peroxide-mediated signaling events. Regulates the activation of NF-kappa-B in the cytosol by a modulation of I-kappa-B-alpha phosphorylation. The sequence is that of Peroxiredoxin-4 (PRDX4) from Homo sapiens (Human).